Consider the following 385-residue polypeptide: Histidinol-phosphate aminotransferase (385 aa).

At K235 the chain carries N6-(pyridoxal phosphate)lysine.

This sequence belongs to the class-II pyridoxal-phosphate-dependent aminotransferase family. Histidinol-phosphate aminotransferase subfamily. Homodimer. Requires pyridoxal 5'-phosphate as cofactor.

The enzyme catalyses L-histidinol phosphate + 2-oxoglutarate = 3-(imidazol-4-yl)-2-oxopropyl phosphate + L-glutamate. It participates in amino-acid biosynthesis; L-histidine biosynthesis; L-histidine from 5-phospho-alpha-D-ribose 1-diphosphate: step 7/9. The sequence is that of Histidinol-phosphate aminotransferase from Nocardia farcinica (strain IFM 10152).